Reading from the N-terminus, the 262-residue chain is MKNLSIIANWKLNGNKNTITNSLINLTTQLTNIPQYIKIAIAPPILYIDMVKNHLTSYNNKTIELCSQNVDIHLSGAFTGDISASMLKDLSVKYVLIGHSERRIYHKENNSLIAQKFSIIKQTELIPILCIGENKEERDSGSTQSICIQQIDSIIKLVGIKAFENTIIAYEPVWAIGSGSSASPRNVQSIHQFIRNYIAQYDKTIANQISIQYGGSITTDNVLEFITQKDIDGVLVGSASLDIRNLIKIINLSSNLIKKTYQ.

9–11 (NWK) lines the substrate pocket. His-99 serves as the catalytic Electrophile. Glu-171 functions as the Proton acceptor in the catalytic mechanism. Residues Gly-177 and Ser-216 each coordinate substrate.

Belongs to the triosephosphate isomerase family. As to quaternary structure, homodimer.

Its subcellular location is the cytoplasm. The catalysed reaction is D-glyceraldehyde 3-phosphate = dihydroxyacetone phosphate. The protein operates within carbohydrate biosynthesis; gluconeogenesis. Its pathway is carbohydrate degradation; glycolysis; D-glyceraldehyde 3-phosphate from glycerone phosphate: step 1/1. In terms of biological role, involved in the gluconeogenesis. Catalyzes stereospecifically the conversion of dihydroxyacetone phosphate (DHAP) to D-glyceraldehyde-3-phosphate (G3P). The protein is Triosephosphate isomerase of Blochmanniella floridana.